The primary structure comprises 155 residues: Ribosome maturation factor RimP (155 aa).

It belongs to the RimP family.

It is found in the cytoplasm. Functionally, required for maturation of 30S ribosomal subunits. The protein is Ribosome maturation factor RimP of Exiguobacterium sibiricum (strain DSM 17290 / CCUG 55495 / CIP 109462 / JCM 13490 / 255-15).